The sequence spans 248 residues: Tyrosine recombinase XerD-like (248 aa).

One can recognise a Core-binding (CB) domain in the interval 1–72 (MKSYIEPFIA…TANQFLYYLY (72 aa)). Residues 85-248 (DTMKVMRTEK…PVTLEKYYKS (164 aa)) form the Tyr recombinase domain. Catalysis depends on residues Lys-149 and Arg-213. Catalysis depends on Tyr-245, which acts as the O-(3'-phospho-DNA)-tyrosine intermediate.

This sequence belongs to the 'phage' integrase family. XerD-like subfamily.

The protein resides in the cytoplasm. Putative tyrosine recombinase. Not involved in the cutting and rejoining of the recombining DNA molecules on dif(SL) site. The polypeptide is Tyrosine recombinase XerD-like (Streptococcus pyogenes serotype M3 (strain ATCC BAA-595 / MGAS315)).